Reading from the N-terminus, the 356-residue chain is UDP-N-acetylglucosamine--N-acetylmuramyl-(pentapeptide) pyrophosphoryl-undecaprenol N-acetylglucosamine transferase (356 aa).

Residues 13-15, Asn-125, Arg-161, Ser-189, Ile-243, and Gln-288 each bind UDP-N-acetyl-alpha-D-glucosamine; that span reads TGG.

The protein belongs to the glycosyltransferase 28 family. MurG subfamily.

It localises to the cell inner membrane. The enzyme catalyses di-trans,octa-cis-undecaprenyl diphospho-N-acetyl-alpha-D-muramoyl-L-alanyl-D-glutamyl-meso-2,6-diaminopimeloyl-D-alanyl-D-alanine + UDP-N-acetyl-alpha-D-glucosamine = di-trans,octa-cis-undecaprenyl diphospho-[N-acetyl-alpha-D-glucosaminyl-(1-&gt;4)]-N-acetyl-alpha-D-muramoyl-L-alanyl-D-glutamyl-meso-2,6-diaminopimeloyl-D-alanyl-D-alanine + UDP + H(+). Its pathway is cell wall biogenesis; peptidoglycan biosynthesis. In terms of biological role, cell wall formation. Catalyzes the transfer of a GlcNAc subunit on undecaprenyl-pyrophosphoryl-MurNAc-pentapeptide (lipid intermediate I) to form undecaprenyl-pyrophosphoryl-MurNAc-(pentapeptide)GlcNAc (lipid intermediate II). The sequence is that of UDP-N-acetylglucosamine--N-acetylmuramyl-(pentapeptide) pyrophosphoryl-undecaprenol N-acetylglucosamine transferase from Cupriavidus metallidurans (strain ATCC 43123 / DSM 2839 / NBRC 102507 / CH34) (Ralstonia metallidurans).